The primary structure comprises 659 residues: MFQNNPLLSQLKQQLHDSKPHVEGVVKGTDKAYGFLETEKETFFIAPPAMKKVMHGDKIKAAIETIGDKKQAEPEELIEPMLTRFIAKVRFNKDKKLQVLVDHPNINQPIGAAQAKTVKQELKEGDWVVATLKTHPLRDDRFFYAQIAEFICSAEDEFAPWWVTLARHEQSRYPVQGQEVYSMLDTETRRDLTALHFVTIDSENTQDMDDALYIEPVTAPNDEQTGWKLAVAIADPTAYIALDSQIEKDARKRCFTNYLPGFNIPMLPRELSDELCSLMENETRAALVCRLETDMQGEIVGEPEFILAQVQSKAKLAYNNVSDYLEQVENAWQPENESTQQQINWLHQFALVRINWRKKHGLLFKEKPDYSFVLADNGHVREIKAEYRRIANQIVEESMIIANICCAHYLAKNAQTGIFNTHVGFDKKFLPNAHNFLMANLSNEENQQELAERYSVENLATLAGYCRMRHDIEPIEGDYLEFRLRRFLTFAEFKSELAPHFGLGLTGYATWTSPIRKYSDMVNHRLIKACLANRECVKPSDETLARLQEARKQNRMVERDIADWLYCRYLADKVESNPEFRAEVQDCMRGGLRVQLLENGASVFVPASSIHPNKDEIQVNTDELALYINGERRYKIGDIVNIRLTEVKEETRSLIGNLV.

In terms of domain architecture, RNB spans 189–532 (RRDLTALHFV…NHRLIKACLA (344 aa)). One can recognise an S1 motif domain in the interval 577–659 (NPEFRAEVQD…ETRSLIGNLV (83 aa)).

The protein belongs to the RNR ribonuclease family. RNase II subfamily.

It is found in the cytoplasm. The catalysed reaction is Exonucleolytic cleavage in the 3'- to 5'-direction to yield nucleoside 5'-phosphates.. Involved in mRNA degradation. Hydrolyzes single-stranded polyribonucleotides processively in the 3' to 5' direction. The polypeptide is Exoribonuclease 2 (Mannheimia succiniciproducens (strain KCTC 0769BP / MBEL55E)).